The chain runs to 328 residues: 3,4-dihydroxyphenylacetaldehyde synthase 2 (328 aa).

Asn111 is a catalytic residue. Lys222 is modified (N6-(pyridoxal phosphate)lysine).

It belongs to the group II decarboxylase family. The cofactor is pyridoxal 5'-phosphate.

It catalyses the reaction L-dopa + O2 + H2O + H(+) = 3,4-dihydroxyphenylacetaldehyde + H2O2 + NH4(+) + CO2. In terms of biological role, catalyzes the decarboxylation-oxidative deamination of L-3,4-dihydroxyphenylalanine (L-DOPA) to 3,4-dihydroxylphenylacetaldehyde (DHPAA). Involved in cuticle development. Probably responsible for the protein cross-linking during the development of flexible cuticles. The protein is 3,4-dihydroxyphenylacetaldehyde synthase 2 (amd) of Drosophila simulans (Fruit fly).